We begin with the raw amino-acid sequence, 605 residues long: Glutamine--fructose-6-phosphate aminotransferase [isomerizing] (605 aa).

The Nucleophile; for GATase activity role is filled by C2. One can recognise a Glutamine amidotransferase type-2 domain in the interval 2-216 (CGIVGIVGHQ…DGDWAVIGKT (215 aa)). SIS domains are found at residues 280 to 420 (DSDA…ARGT) and 454 to 595 (LSRE…VDQP). K600 functions as the For Fru-6P isomerization activity in the catalytic mechanism.

Its subcellular location is the cytoplasm. It catalyses the reaction D-fructose 6-phosphate + L-glutamine = D-glucosamine 6-phosphate + L-glutamate. Its function is as follows. Involved in the production of the root hair deformation (HAD) factor specifically on medicago. The sequence is that of Glutamine--fructose-6-phosphate aminotransferase [isomerizing] (nodM) from Rhizobium meliloti (Ensifer meliloti).